Here is an 876-residue protein sequence, read N- to C-terminus: Alanine--tRNA ligase (876 aa).

Positions 565, 569, 667, and 671 each coordinate Zn(2+).

The protein belongs to the class-II aminoacyl-tRNA synthetase family. Requires Zn(2+) as cofactor.

Its subcellular location is the cytoplasm. The catalysed reaction is tRNA(Ala) + L-alanine + ATP = L-alanyl-tRNA(Ala) + AMP + diphosphate. Its function is as follows. Catalyzes the attachment of alanine to tRNA(Ala) in a two-step reaction: alanine is first activated by ATP to form Ala-AMP and then transferred to the acceptor end of tRNA(Ala). Also edits incorrectly charged Ser-tRNA(Ala) and Gly-tRNA(Ala) via its editing domain. This chain is Alanine--tRNA ligase, found in Staphylococcus aureus (strain MSSA476).